Reading from the N-terminus, the 475-residue chain is Alpha,alpha-trehalose-phosphate synthase [UDP-forming] (475 aa).

Tyr93 and Asp147 together coordinate D-glucose 6-phosphate. Arg285 and Lys290 together coordinate UDP. UDP-alpha-D-glucose-binding residues include Arg285 and Lys290. Residue Arg323 participates in D-glucose 6-phosphate binding. Residue 384-392 (DGMNLVSYE) participates in UDP-alpha-D-glucose binding. 388–392 (LVSYE) lines the UDP pocket.

Belongs to the glycosyltransferase 20 family.

The enzyme catalyses D-glucose 6-phosphate + UDP-alpha-D-glucose = alpha,alpha-trehalose 6-phosphate + UDP + H(+). Its pathway is carbohydrate biosynthesis. Synthase catalytic subunit of the trehalose synthase complex that catalyzes the production of trehalose from glucose-6-phosphate and UDP-alpha-D-glucose in a two step process. In Pichia angusta (Yeast), this protein is Alpha,alpha-trehalose-phosphate synthase [UDP-forming].